The primary structure comprises 451 residues: Velvet complex subunit 2 (451 aa).

Disordered regions lie at residues 1–95 (MNTT…PRSI), 205–312 (PGQS…QTNP), and 426–451 (PIRK…DDDY). 3 stretches are compositionally biased toward polar residues: residues 18–28 (TMPSLHDTTYR), 40–62 (MPQT…NSLP), and 205–217 (PGQS…SPTY). Residues 92–428 (PRSITVDGRK…ATQGIKIPIR (337 aa)) form the Velvet domain. Positions 267–283 (PQQSNYYYPQPSQSIPS) are enriched in low complexity. The segment covering 427-445 (IRKDGKDGPGKGGKDGSRG) has biased composition (basic and acidic residues).

Belongs to the velvet family. VelB subfamily. In terms of assembly, component of the heterotrimeric velvet complex composed of LAE1, VEL1 and VEL2; VEL1 acting as a bridging protein between LAE1 and VEL2. Forms a heterodimeric complex with VOS1; the formation of the VEL2-VOS1 complex is light-dependent.

The protein resides in the nucleus. The protein localises to the cytoplasm. In terms of biological role, component of the velvet transcription factor complex that controls sexual/asexual developmental ratio in response to light, promoting sexual development in the darkness while stimulating asexual sporulation under illumination. The velvet complex acts as a global regulator for secondary metabolite gene expression. Component of the VEL2-VOS1 heterodimeric complex that plays a dual role in activating genes associated with spore maturation and repressing certain development-associated genes. The VEL2-VOS1 complex binds DNA through the DNA-binding domain of VOS1 that recognizes an 11-nucleotide consensus sequence 5'-CTGGCCGCGGC-3' consisting of two motifs in the promoters of key developmental regulatory genes. Controls the expression of the oxalic acid and melanin gene clusters. Involved in the resistance to oxidative stress. Required for full virulence. The polypeptide is Velvet complex subunit 2 (Botryotinia fuckeliana (strain B05.10) (Noble rot fungus)).